Reading from the N-terminus, the 330-residue chain is ADP-L-glycero-D-manno-heptose-6-epimerase (330 aa).

NADP(+) contacts are provided by residues 11–12, 32–33, Q39, Q54, 75–79, and N92; these read FI, DD, and QGACA. The Proton acceptor role is filled by Y139. Residue K143 participates in NADP(+) binding. N168 is a substrate binding site. The NADP(+) site is built by V169 and K177. Residue K177 is the Proton acceptor of the active site. Substrate-binding positions include R179, H186, 200 to 203, R213, and Y292; that span reads FGEH.

This sequence belongs to the NAD(P)-dependent epimerase/dehydratase family. HldD subfamily. Homopentamer. NADP(+) serves as cofactor.

It catalyses the reaction ADP-D-glycero-beta-D-manno-heptose = ADP-L-glycero-beta-D-manno-heptose. The protein operates within nucleotide-sugar biosynthesis; ADP-L-glycero-beta-D-manno-heptose biosynthesis; ADP-L-glycero-beta-D-manno-heptose from D-glycero-beta-D-manno-heptose 7-phosphate: step 4/4. Catalyzes the interconversion between ADP-D-glycero-beta-D-manno-heptose and ADP-L-glycero-beta-D-manno-heptose via an epimerization at carbon 6 of the heptose. This is ADP-L-glycero-D-manno-heptose-6-epimerase from Pseudomonas aeruginosa (strain UCBPP-PA14).